The sequence spans 400 residues: Elongation factor Tu 1 (400 aa).

A tr-type G domain is found at 10 to 209; it reads KPHLNIGTIG…AVDSYIPLPQ (200 aa). The interval 19 to 26 is G1; it reads GHIDHGKT. GTP is bound at residue 19 to 26; that stretch reads GHIDHGKT. Thr26 contacts Mg(2+). Positions 60–64 are G2; that stretch reads GITIN. Positions 81-84 are G3; that stretch reads DCPG. GTP is bound by residues 81 to 85 and 136 to 139; these read DCPGH and NKTD. A G4 region spans residues 136–139; sequence NKTD. Positions 174–176 are G5; sequence SAL.

It belongs to the TRAFAC class translation factor GTPase superfamily. Classic translation factor GTPase family. EF-Tu/EF-1A subfamily. As to quaternary structure, monomer.

It is found in the cytoplasm. It carries out the reaction GTP + H2O = GDP + phosphate + H(+). In terms of biological role, GTP hydrolase that promotes the GTP-dependent binding of aminoacyl-tRNA to the A-site of ribosomes during protein biosynthesis. The sequence is that of Elongation factor Tu 1 from Syntrophomonas wolfei subsp. wolfei (strain DSM 2245B / Goettingen).